A 290-amino-acid chain; its full sequence is Ribosomal RNA small subunit methyltransferase A (290 aa).

6 residues coordinate S-adenosyl-L-methionine: histidine 37, valine 39, glycine 64, glutamate 85, aspartate 115, and asparagine 132.

Belongs to the class I-like SAM-binding methyltransferase superfamily. rRNA adenine N(6)-methyltransferase family. RsmA subfamily.

The protein resides in the cytoplasm. The enzyme catalyses adenosine(1518)/adenosine(1519) in 16S rRNA + 4 S-adenosyl-L-methionine = N(6)-dimethyladenosine(1518)/N(6)-dimethyladenosine(1519) in 16S rRNA + 4 S-adenosyl-L-homocysteine + 4 H(+). In terms of biological role, specifically dimethylates two adjacent adenosines (A1518 and A1519) in the loop of a conserved hairpin near the 3'-end of 16S rRNA in the 30S particle. May play a critical role in biogenesis of 30S subunits. The chain is Ribosomal RNA small subunit methyltransferase A from Acidothermus cellulolyticus (strain ATCC 43068 / DSM 8971 / 11B).